The primary structure comprises 612 residues: MPEYRSKTSTHGRNMAGARALWRATGMRDGDFHKPIIAIANSFTQFVPGHVHLKDLGQLVAREIERVGGVAKEFDTIAVDDGIAMGHDGMLYSLPSREIIADSVEYMVNAHCADALVCISNCDKITPGMLMAALRLNIPTVFVSGGPMEAGKTKLAEHKLDLIDAMVIAADDSASDEKVAEFERSACPTCGSCSGMFTANSMNCLTEALGLSLPGNGTVVATHADREQLFLRAGRVAVELCHRWYGGEDPTALPRGIATFEAFENAMTLDIAMGGSTNTILHLLAAAQEGEVAFGMHDIDRLSKRVPQLCKVAPNTPKYHIEDVHRAGGIMAILGELARGGLLHTNAATVHARTLAEAIAQWDVTQTDDETVHTFYKAGPAGIPTQIAFSQATRWDSLDTDRSEGCIRDIAHAFSQEGGLAVLYGNIARDGCVVKTAGVDESIHVFEGTARVFESQDAAVKGILADEVVAGDVVVIRYEGPKGGPGMQEMLYPTSYLKSKGLGKQCALLTDGRFSGGTSGLSIGHASPEAAAGGAIGLVRDGDRILIDIPKRSINLLISDEELALRRAEQDAKGWKPVEVRPRKVTTALKAYALLATSADKGAVRDKALLDG.

A Mg(2+)-binding site is contributed by Asp-81. Residue Cys-122 coordinates [2Fe-2S] cluster. Asp-123 and Lys-124 together coordinate Mg(2+). Lys-124 bears the N6-carboxylysine mark. Cys-193 is a [2Fe-2S] cluster binding site. Glu-489 serves as a coordination point for Mg(2+). Ser-515 acts as the Proton acceptor in catalysis.

This sequence belongs to the IlvD/Edd family. As to quaternary structure, homodimer. [2Fe-2S] cluster is required as a cofactor. Mg(2+) serves as cofactor.

The enzyme catalyses (2R)-2,3-dihydroxy-3-methylbutanoate = 3-methyl-2-oxobutanoate + H2O. The catalysed reaction is (2R,3R)-2,3-dihydroxy-3-methylpentanoate = (S)-3-methyl-2-oxopentanoate + H2O. It functions in the pathway amino-acid biosynthesis; L-isoleucine biosynthesis; L-isoleucine from 2-oxobutanoate: step 3/4. Its pathway is amino-acid biosynthesis; L-valine biosynthesis; L-valine from pyruvate: step 3/4. Functionally, functions in the biosynthesis of branched-chain amino acids. Catalyzes the dehydration of (2R,3R)-2,3-dihydroxy-3-methylpentanoate (2,3-dihydroxy-3-methylvalerate) into 2-oxo-3-methylpentanoate (2-oxo-3-methylvalerate) and of (2R)-2,3-dihydroxy-3-methylbutanoate (2,3-dihydroxyisovalerate) into 2-oxo-3-methylbutanoate (2-oxoisovalerate), the penultimate precursor to L-isoleucine and L-valine, respectively. The polypeptide is Dihydroxy-acid dehydratase (Xanthomonas euvesicatoria pv. vesicatoria (strain 85-10) (Xanthomonas campestris pv. vesicatoria)).